Consider the following 898-residue polypeptide: Eukaryotic translation initiation factor 3 subunit C (898 aa).

Residues 1-10 are compositionally biased toward basic and acidic residues; the sequence is MSRFFHAKED. Disordered regions lie at residues 1 to 38 and 162 to 238; these read MSRF…DDLD and VTDY…SVTK. Residues 11 to 23 are compositionally biased toward acidic residues; the sequence is SDSDTSSSEDEVE. The span at 24 to 37 shows a compositional bias: basic and acidic residues; it reads DQKVNKSAKFRDDL. A compositionally biased stretch (acidic residues) spans 170-187; the sequence is DEDGYETPEDEDDDDFGE. Residues 189–202 are compositionally biased toward basic and acidic residues; the sequence is SESKAEKSPGKPSE. The segment covering 209 to 218 has biased composition (acidic residues); that stretch reads SDSDSDDDDS. Over residues 219–228 the composition is skewed to low complexity; that stretch reads SNWSSEPESN. The region spanning 630–806 is the PCI domain; the sequence is YHMHINVELM…DCLIMHRVEP (177 aa). A disordered region spans residues 829 to 898; sequence QILEPRTGRG…RRHPQKPRAF (70 aa). Composition is skewed to basic and acidic residues over residues 850 to 859 and 866 to 878; these read RNERQGDKQK and GERR…DGKR. The segment covering 888 to 898 has biased composition (basic residues); sequence QRRHPQKPRAF.

The protein belongs to the eIF-3 subunit C family. As to quaternary structure, component of the eukaryotic translation initiation factor 3 (eIF-3) complex.

Its subcellular location is the cytoplasm. Functionally, component of the eukaryotic translation initiation factor 3 (eIF-3) complex, which is involved in protein synthesis of a specialized repertoire of mRNAs and, together with other initiation factors, stimulates binding of mRNA and methionyl-tRNAi to the 40S ribosome. The eIF-3 complex specifically targets and initiates translation of a subset of mRNAs involved in cell proliferation. This Caenorhabditis elegans protein is Eukaryotic translation initiation factor 3 subunit C.